Reading from the N-terminus, the 181-residue chain is UPF0398 protein lmo1889 (181 aa).

It belongs to the UPF0398 family.

This is UPF0398 protein lmo1889 from Listeria monocytogenes serovar 1/2a (strain ATCC BAA-679 / EGD-e).